A 410-amino-acid chain; its full sequence is Gamma-glutamyl phosphate reductase (410 aa).

This sequence belongs to the gamma-glutamyl phosphate reductase family.

The protein localises to the cytoplasm. The enzyme catalyses L-glutamate 5-semialdehyde + phosphate + NADP(+) = L-glutamyl 5-phosphate + NADPH + H(+). It participates in amino-acid biosynthesis; L-proline biosynthesis; L-glutamate 5-semialdehyde from L-glutamate: step 2/2. Functionally, catalyzes the NADPH-dependent reduction of L-glutamate 5-phosphate into L-glutamate 5-semialdehyde and phosphate. The product spontaneously undergoes cyclization to form 1-pyrroline-5-carboxylate. This chain is Gamma-glutamyl phosphate reductase, found in Sulfurovum sp. (strain NBC37-1).